The sequence spans 179 residues: Apoptosis regulator Bcl-2 homolog (179 aa).

Positions 76–95 match the BH1 motif; sequence ELFKDLINWGRICGFIVFSA. The BH2 signature appears at 126–141; it reads PWMISHGGQEEFLAFS.

This sequence belongs to the Bcl-2 family. As to quaternary structure, interacts with host BECN1 (via BH3 homology domain); this interaction allows the virus to inhibit BECN1, and thus autophagy. Interacts with host BID. Interacts with host BAX.

Its subcellular location is the host mitochondrion. The protein resides in the host endoplasmic reticulum. In terms of biological role, suppresses apoptosis in host cell to promote the viral replication. Has the ability to potentially bind to all the members of the proapoptotic Bcl-2 family. Inhibits autophagy by interacting with host Beclin 1 (BECN1). This is Apoptosis regulator Bcl-2 homolog from Ornithodoros (relapsing fever ticks).